The chain runs to 320 residues: Protein LATERAL ROOT PRIMORDIUM 1 (320 aa).

Residues 90–110 (QTTVGTSSNNSGSGSGASGTA) form a disordered region. Positions 112, 115, 123, 128, 132, and 139 each coordinate Zn(2+). The segment at residues 112-139 (CQDCGNQAKKECKQRRCRTCCKSRGFDC) is a DNA-binding region (zn(2)-C6 fungal-type; degenerate). A disordered region spans residues 150-223 (AARRRERQVM…QDGGGSREAW (74 aa)). Positions 168–177 (GSSLSTSSGT) are enriched in low complexity. Over residues 193 to 214 (ATSHTSTSNTPPQSFETSSSRQ) the composition is skewed to polar residues. The Required for homo- and heterodimerization signature appears at 256–259 (IGGH).

The protein belongs to the SHI protein family. As to quaternary structure, homodimer. In terms of tissue distribution, restricted to lateral root primordia.

Its subcellular location is the nucleus. Transcription activator that binds DNA on 5'-ACTCTAC-3' and promotes auxin homeostasis-regulating gene expression (e.g. YUC genes), as well as genes affecting stamen development, cell expansion and timing of flowering. Synergistically with other SHI-related proteins, regulates gynoecium, stamen and leaf development in a dose-dependent manner, controlling apical-basal patterning. Promotes style and stigma formation, and influence vascular development during gynoecium development. May also have a role in the formation and/or maintenance of the shoot apical meristem (SAM). Modulates root growth. In Arabidopsis thaliana (Mouse-ear cress), this protein is Protein LATERAL ROOT PRIMORDIUM 1 (LRP1).